The chain runs to 143 residues: Large ribosomal subunit protein bL17 (143 aa).

Belongs to the bacterial ribosomal protein bL17 family. In terms of assembly, part of the 50S ribosomal subunit. Contacts protein L32.

This Chelativorans sp. (strain BNC1) protein is Large ribosomal subunit protein bL17.